A 141-amino-acid chain; its full sequence is 2S seed storage albumin protein (141 aa).

An N-terminal signal peptide occupies residues 1 to 22 (MARLTSIIALFAVALLVADAYA). Positions 23–35 (YRTTITTVEVEEN) are excised as a propeptide. Cystine bridges form between cysteine 43/cysteine 97, cysteine 55/cysteine 86, cysteine 87/cysteine 132, and cysteine 99/cysteine 139.

It belongs to the 2S seed storage albumins family. In terms of assembly, the mature protein consists of a small and a large chain linked by 2 disulfide bonds.

The protein localises to the vacuole. It localises to the aleurone grain. This is a 2S seed storage protein. This Cucurbita maxima (Pumpkin) protein is 2S seed storage albumin protein.